The chain runs to 60 residues: MAVPKFKPSKSRSRTRRSINMRKKIPQLQECSNCGYLVIRHRVCLKCGYYKNIQYLELGL.

The protein belongs to the bacterial ribosomal protein bL32 family.

This chain is Large ribosomal subunit protein bL32, found in Borrelia hermsii (strain HS1 / DAH).